The primary structure comprises 452 residues: Eukaryotic translation initiation factor 3 subunit E (452 aa).

The PCI domain occupies 257 to 426 (TDLFFSPAYI…GTVIMNHPPQ (170 aa)).

This sequence belongs to the eIF-3 subunit E family. In terms of assembly, component of the eukaryotic translation initiation factor 3 (eIF-3) complex.

Its subcellular location is the cytoplasm. In terms of biological role, component of the eukaryotic translation initiation factor 3 (eIF-3) complex, which is involved in protein synthesis of a specialized repertoire of mRNAs and, together with other initiation factors, stimulates binding of mRNA and methionyl-tRNAi to the 40S ribosome. The eIF-3 complex specifically targets and initiates translation of a subset of mRNAs involved in cell proliferation. In Aspergillus niger (strain ATCC MYA-4892 / CBS 513.88 / FGSC A1513), this protein is Eukaryotic translation initiation factor 3 subunit E (int6).